The primary structure comprises 144 residues: HTH-type transcriptional regulator MntR (144 aa).

The HTH dtxR-type domain occupies 1-63 (MTTPSMEDYI…YEKYRGLILT (63 aa)). Mn(2+) is bound by residues Asp-8, Glu-11, His-77, Glu-99, Glu-102, and His-103.

This sequence belongs to the DtxR/MntR family. In terms of assembly, homodimer.

The protein localises to the cytoplasm. Its activity is regulated as follows. DNA binding is strongly activated by Mn(2+). In terms of biological role, central regulator of manganese homeostasis. The chain is HTH-type transcriptional regulator MntR from Bacillus pumilus (strain SAFR-032).